Reading from the N-terminus, the 306-residue chain is Latrophilin receptor-like protein A (306 aa).

Residues 1–15 (MPSQLLNTVLSYLTD) lie on the Extracellular side of the membrane. Residues 16–36 (ILLSLSIVGSFLTIFTFMLYP) traverse the membrane as a helical segment. Over 37 to 41 (KLRSY) the chain is Cytoplasmic. A helical transmembrane segment spans residues 42–62 (PIKLIIYLCMSIVFSLFFFEI). The Extracellular portion of the chain corresponds to 63 to 70 (SFRSSNSL). Residues 71-91 (FCIPAAILVHYFFLANFFWTF) form a helical membrane-spanning segment. At 92–113 (SVSFNFFQMIVKRNRDSEFYER) the chain is on the cytoplasmic side. The helical transmembrane segment at 114–134 (YYHLISWGIPFIIIIFCAAFK) threads the bilayer. Residues 135–152 (KYVDRGGFCYLEDQYSVY) lie on the Extracellular side of the membrane. Residues 153 to 173 (FGFFMPGVIIVCSNICIYVFV) form a helical membrane-spanning segment. Topologically, residues 174–196 (AKEIYKTLRHTPTQKRQTVKEFR) are cytoplasmic. Residues 197–217 (VYFSIFVSIGSSWIFGFIYMF) form a helical membrane-spanning segment. The Extracellular portion of the chain corresponds to 218-222 (SDSNS). The helical transmembrane segment at 223–243 (IIGYIFLILFSISTSLQGFFI) threads the bilayer. Residues 244-306 (FISYCLNYKV…TTTTTNVYSA (63 aa)) lie on the Cytoplasmic side of the membrane. A disordered region spans residues 279-306 (TTQSGPTGTTDSSSTMTSTTTTTNVYSA).

Belongs to the G-protein coupled receptor 2 family. LN-TM7 subfamily.

Its subcellular location is the membrane. This Dictyostelium discoideum (Social amoeba) protein is Latrophilin receptor-like protein A (lrlA).